Here is a 160-residue protein sequence, read N- to C-terminus: Deoxyuridine 5'-triphosphate nucleotidohydrolase (160 aa).

Substrate is bound by residues 79–81, Asn-92, 96–98, and Lys-106; these read RSG and TVD.

This sequence belongs to the dUTPase family. Mg(2+) serves as cofactor.

The enzyme catalyses dUTP + H2O = dUMP + diphosphate + H(+). It participates in pyrimidine metabolism; dUMP biosynthesis; dUMP from dCTP (dUTP route): step 2/2. Functionally, this enzyme is involved in nucleotide metabolism: it produces dUMP, the immediate precursor of thymidine nucleotides and it decreases the intracellular concentration of dUTP so that uracil cannot be incorporated into DNA. This Rhizobium meliloti (strain 1021) (Ensifer meliloti) protein is Deoxyuridine 5'-triphosphate nucleotidohydrolase.